Reading from the N-terminus, the 337-residue chain is Ornithine carbamoyltransferase (337 aa).

Residues 57–60, Q84, R108, and 135–138 each bind carbamoyl phosphate; these read STRT and HPTQ. Residues N167, D231, and 235–236 contribute to the L-ornithine site; that span reads SM. Residues 272–273 and R317 each bind carbamoyl phosphate; that span reads CL.

Belongs to the aspartate/ornithine carbamoyltransferase superfamily. OTCase family.

It localises to the cytoplasm. It carries out the reaction carbamoyl phosphate + L-ornithine = L-citrulline + phosphate + H(+). The protein operates within amino-acid degradation; L-arginine degradation via ADI pathway; carbamoyl phosphate from L-arginine: step 2/2. Its function is as follows. Reversibly catalyzes the transfer of the carbamoyl group from carbamoyl phosphate (CP) to the N(epsilon) atom of ornithine (ORN) to produce L-citrulline. The polypeptide is Ornithine carbamoyltransferase (Streptococcus uberis (strain ATCC BAA-854 / 0140J)).